We begin with the raw amino-acid sequence, 288 residues long: Beta-lactamase PSE-4 (288 aa).

Positions 1–17 are cleaved as a signal peptide; sequence MKFLLAFSLLIPSVVFA. Ser-65 acts as the Acyl-ester intermediate in catalysis. A disulfide bridge connects residues Cys-72 and Cys-118. A substrate-binding site is contributed by 229–231; it reads RSG.

This sequence belongs to the class-A beta-lactamase family.

It catalyses the reaction a beta-lactam + H2O = a substituted beta-amino acid. Functionally, hydrolyzes both carbenicillin and oxacillin. The chain is Beta-lactamase PSE-4 (pse4) from Pseudomonas aeruginosa.